Here is a 313-residue protein sequence, read N- to C-terminus: Aspartate carbamoyltransferase catalytic subunit (313 aa).

Carbamoyl phosphate contacts are provided by arginine 58 and threonine 59. Position 86 (lysine 86) interacts with L-aspartate. Residues arginine 108, histidine 136, and glutamine 139 each contribute to the carbamoyl phosphate site. L-aspartate is bound by residues arginine 169 and arginine 223. Carbamoyl phosphate contacts are provided by glycine 264 and proline 265.

The protein belongs to the aspartate/ornithine carbamoyltransferase superfamily. ATCase family. In terms of assembly, heterododecamer (2C3:3R2) of six catalytic PyrB chains organized as two trimers (C3), and six regulatory PyrI chains organized as three dimers (R2).

It catalyses the reaction carbamoyl phosphate + L-aspartate = N-carbamoyl-L-aspartate + phosphate + H(+). It functions in the pathway pyrimidine metabolism; UMP biosynthesis via de novo pathway; (S)-dihydroorotate from bicarbonate: step 2/3. Functionally, catalyzes the condensation of carbamoyl phosphate and aspartate to form carbamoyl aspartate and inorganic phosphate, the committed step in the de novo pyrimidine nucleotide biosynthesis pathway. This is Aspartate carbamoyltransferase catalytic subunit from Halothermothrix orenii (strain H 168 / OCM 544 / DSM 9562).